We begin with the raw amino-acid sequence, 46 residues long: Apamin (46 aa).

Positions 1–27 (MISMLRCIYLFLSVILITSYFVTPVMP) are cleaved as a signal peptide. 2 cysteine pairs are disulfide-bonded: cysteine 28/cysteine 38 and cysteine 30/cysteine 42. Residues 40 to 41 (RR) form an essential for toxin activity region. Histidine 45 carries the post-translational modification Histidine amide.

Expressed by the venom gland.

The protein resides in the secreted. Toxin with unique selectivity to KCa2 channels. Potently blocks human, rat and mouse KCa2.2/KCNN2/SK2 channels (IC(50)=27-140 pM), and moderately blocks human and rat KCa2.3/KCNN3/SK3 channels (IC(50)=0.6-4 nM), and human (IC(50)=0.7-12 nM) and mouse (IC(50)=28 nM) KCa2.1/KCNN1/SK1 channels. Does not show any antimicrobial activity. In vivo, intracerebroventricular injection into rats of a dose of 1 ng results in neurodegeneration specifically in the Purkinje cells of the cerebellum, and induces seizures characterized by hypersensitivity to noise, loss of postural control, paroxystic jerking, and alternating periods of great agitation with tonic-clonic convulsions and periods of total prostration. When administered at high doses, exerts anti-inflammatory, anti-oxidative, anti-fibrotic and anti-apoptotic properties in several models of inflammatory disease, including gouty arthritis, atherosclerosis, atopic dermatitis and acute kidney injury. Down-regulates pro-inflammatory signaling pathways, such as the NF-kappaB and STAT3 pathways, probably by blocking SK channels such as KCa2.2/KCNN2/SK2 and/or KCa2.3/KCNN3/SK3 which are thought to be involved in promoting some inflammatory responses. For example in mouse and rat microglia cells, inhibits LPS-activated KCa2.2/KCNN2/SK2 channels and TLR4 expression leading to the down-regulation of the NF-kappaB, STAT, and MAPK/ERK signaling pathways and, as a consequence, decreases secretion of pro-inflammatory cytokines. The sequence is that of Apamin from Apis mellifera (Honeybee).